The following is a 169-amino-acid chain: uncharacterized protein (169 aa).

The region spanning leucine 35–leucine 163 is the Nudix hydrolase domain. A Nudix box motif is present at residues tyrosine 81 to histidine 103. Mg(2+)-binding residues include glutamate 88 and glutamate 92.

This sequence belongs to the Nudix hydrolase family. The cofactor is Mg(2+).

This is an uncharacterized protein from Pseudomonas aeruginosa (strain ATCC 15692 / DSM 22644 / CIP 104116 / JCM 14847 / LMG 12228 / 1C / PRS 101 / PAO1).